The chain runs to 329 residues: Lipoyl synthase (329 aa).

7 residues coordinate [4Fe-4S] cluster: Cys-55, Cys-60, Cys-66, Cys-81, Cys-85, Cys-88, and Ser-292. Positions Trp-67 to Leu-281 constitute a Radical SAM core domain.

This sequence belongs to the radical SAM superfamily. Lipoyl synthase family. The cofactor is [4Fe-4S] cluster.

It localises to the cytoplasm. The enzyme catalyses [[Fe-S] cluster scaffold protein carrying a second [4Fe-4S](2+) cluster] + N(6)-octanoyl-L-lysyl-[protein] + 2 oxidized [2Fe-2S]-[ferredoxin] + 2 S-adenosyl-L-methionine + 4 H(+) = [[Fe-S] cluster scaffold protein] + N(6)-[(R)-dihydrolipoyl]-L-lysyl-[protein] + 4 Fe(3+) + 2 hydrogen sulfide + 2 5'-deoxyadenosine + 2 L-methionine + 2 reduced [2Fe-2S]-[ferredoxin]. It functions in the pathway protein modification; protein lipoylation via endogenous pathway; protein N(6)-(lipoyl)lysine from octanoyl-[acyl-carrier-protein]: step 2/2. Catalyzes the radical-mediated insertion of two sulfur atoms into the C-6 and C-8 positions of the octanoyl moiety bound to the lipoyl domains of lipoate-dependent enzymes, thereby converting the octanoylated domains into lipoylated derivatives. In Clavibacter sepedonicus (Clavibacter michiganensis subsp. sepedonicus), this protein is Lipoyl synthase.